The primary structure comprises 48 residues: Large ribosomal subunit protein eL40 (48 aa).

This sequence belongs to the eukaryotic ribosomal protein eL40 family.

The sequence is that of Large ribosomal subunit protein eL40 from Methanosphaera stadtmanae (strain ATCC 43021 / DSM 3091 / JCM 11832 / MCB-3).